The primary structure comprises 336 residues: Serpentine receptor class gamma-13 (336 aa).

8 consecutive transmembrane segments (helical) span residues 32–52 (LKYI…FLII), 68–88 (FFII…SEIL), 93–113 (FIYV…PSIF), 133–153 (VFLS…SAIW), 156–176 (ILTP…WNVL), 210–230 (FIVS…ALLI), 246–266 (TMVL…FAFF), and 277–297 (LLRV…IIFI).

It belongs to the nematode receptor-like protein srg family.

The protein resides in the membrane. In Caenorhabditis elegans, this protein is Serpentine receptor class gamma-13 (srg-13).